Here is a 163-residue protein sequence, read N- to C-terminus: Cytochrome c-type biogenesis protein CcmE (163 aa).

Residues 1–8 (MNPRRKKR) are Cytoplasmic-facing. The chain crosses the membrane as a helical; Signal-anchor for type II membrane protein span at residues 9-29 (LTLAVALIVGVAGAASLLLYA). Residues 30–163 (LNSNLNLFYT…QEGVEKTAQY (134 aa)) are Periplasmic-facing. The heme site is built by H131 and Y135.

The protein belongs to the CcmE/CycJ family.

The protein resides in the cell inner membrane. Heme chaperone required for the biogenesis of c-type cytochromes. Transiently binds heme delivered by CcmC and transfers the heme to apo-cytochromes in a process facilitated by CcmF and CcmH. The protein is Cytochrome c-type biogenesis protein CcmE of Shewanella denitrificans (strain OS217 / ATCC BAA-1090 / DSM 15013).